The sequence spans 1769 residues: Tight junction protein 1 (1769 aa).

The PDZ 1 domain maps to 23 to 110 (TVTLHRAPGF…NAKITIRRKK (88 aa)). The segment covering 102 to 112 (AKITIRRKKKV) has biased composition (basic residues). The disordered stretch occupies residues 102–188 (AKITIRRKKK…QPPKPTKVTL (87 aa)). The span at 123-135 (PVSENEDSYDEEV) shows a compositional bias: acidic residues. At Ser125 the chain carries Phosphoserine. At Tyr131 the chain carries Phosphotyrosine. Over residues 148–174 (RRSEKSWARDRSASRERSLSPRSDRRS) the composition is skewed to basic and acidic residues. Phosphoserine is present on residues Ser174, Ser177, and Ser178. At Thr184 the chain carries Phosphothreonine. The PDZ 2 domain maps to 185 to 263 (KVTLVKSRKN…KLKMVVQRDE (79 aa)). Residues Ser211 and Ser240 each carry the phosphoserine modification. At Thr266 the chain carries Phosphothreonine. A phosphoserine mark is found at Ser274, Ser276, Ser279, Ser283, Ser289, Ser293, Ser296, Ser299, Ser322, Ser328, Ser333, Ser336, and Ser352. Residues 295–362 (ASDHSGRSHD…TPVKHADDHT (68 aa)) form a disordered region. Residues 298-326 (HSGRSHDRPPRHSRSRSPDQRSEPSDHSR) are compositionally biased toward basic and acidic residues. A Phosphothreonine modification is found at Thr353. Residues 420-501 (SMKLVKFRKG…GEEVTILAQK (82 aa)) form the PDZ 3 domain. The 69-residue stretch at 515–583 (GDSFYIRTHF…PNKNRAEQLA (69 aa)) folds into the SH3 domain. The 182-residue stretch at 609 to 790 (SKRNLRKSRE…WYGALKEAIQ (182 aa)) folds into the Guanylate kinase-like domain. Ser616 and Ser621 each carry phosphoserine. Positions 632-875 (YERVVLREAG…GTPPESAITR (244 aa)) are occludin (OCLN)-binding region. Thr808 is subject to Phosphothreonine. Phosphoserine is present on residues Ser809 and Ser820. Phosphotyrosine is present on Tyr821. 3 positions are modified to phosphoserine: Ser823, Ser827, and Ser836. 2 disordered regions span residues 824–976 (APGS…LRTP) and 1010–1067 (EMMR…SYTD). Residues Thr845, Thr847, Thr853, Thr860, and Thr867 each carry the phosphothreonine modification. The span at 878 to 891 (EPVREDSSGMHHEN) shows a compositional bias: basic and acidic residues. Over residues 892-905 (QTYPPYSPQAQPQP) the composition is skewed to low complexity. Ser911 is subject to Phosphoserine. Polar residues-rich tracts occupy residues 933–952 (PETN…TLTN) and 962–976 (PSTS…LRTP). Ser967 bears the Phosphoserine mark. Phosphoserine is present on Ser1070. 3 disordered regions span residues 1091 to 1212 (SYYD…KAGH), 1224 to 1261 (PLIP…MKPQ), and 1273 to 1589 (KRSA…EFDS). Positions 1108 to 1124 (QHPRDLDSRQHPEESSE) are enriched in basic and acidic residues. Residue Ser1138 is modified to Phosphoserine. Tyr1139 and Tyr1164 each carry phosphotyrosine. The actin-binding region (ABR) stretch occupies residues 1150–1370 (RTSTLRHEEQ…FDRRSFENKP (221 aa)). Basic and acidic residues predominate over residues 1273 to 1286 (KRSASLENKKDENH). Residues 1300–1310 (PGAPIIGPKPT) show a composition bias toward pro residues. Residues 1335 to 1346 (PPEDIVRSNHYD) are compositionally biased toward basic and acidic residues. A Phosphotyrosine modification is found at Tyr1353. Ser1365 carries the post-translational modification Phosphoserine. Polar residues predominate over residues 1387 to 1401 (HSQNQTNFSSYSSKG). Basic and acidic residues predominate over residues 1402–1419 (KSPEADAPDRSFGEKRYE). At Ser1412 the chain carries Phosphoserine. 2 stretches are compositionally biased toward polar residues: residues 1460-1471 (NSISLDFQNSLV) and 1514-1523 (AEQTQKTVTP). A compositionally biased stretch (basic and acidic residues) spans 1539 to 1548 (PFERKFESPK). Residues Ser1546 and Ser1618 each carry the phosphoserine modification. The ZU5 domain maps to 1635–1769 (ATARGVFNNN…NCVSVLIDHF (135 aa)).

This sequence belongs to the MAGUK family. In terms of assembly, homodimer. Forms heterodimers TJP3. Forms a heterodimer (via PDZ2 domain) with TJP2/ZO2 (via PDZ2 domain). Interacts with OCLN. Interacts with CALM, claudins, CGN/cingulin, CXADR, GJA12, GJD3 and UBN1. Interacts (via ZU5 domain) with CDC42BPB and MYZAP. Interacts (via PDZ domain) with GJA1. Interacts (via PDZ domains) with ANKRD2. Interacts with POPDC1 (via the C-terminus cytoplasmic tail). Interacts with HSPA4. Interacts with KIRREL1. Interacts with DLL1. Interacts with USP53 (via the C-terminal region). Interacts with DNMBP (via C-terminal domain); required for the apical cell-cell junction localization of DNMBP. Interacts with SPEF1. Interacts (via N-terminus) with CTNNA1. Interacts with CLDN18. Interacts with CLDN16 (via TRV motif); this is a prerequisite for anchoring of CLDN16 at the tight junction. Interacts with PKP1; the interaction facilitates TJP1/ZO-1 localization to the plasma membrane. Interacts with PATJ (via PDZ1-6 domains); the interaction is required for attachment and extension of TJP1/ZO1 condensates along the apical cell interface. Phosphorylated at tyrosine redidues in response to epidermal growth factor (EGF). This response is dependent on an intact actin microfilament system. Dephosphorylated by PTPRJ.

The protein localises to the cell membrane. The protein resides in the cell junction. Its subcellular location is the tight junction. It localises to the gap junction. Its function is as follows. TJP1, TJP2, and TJP3 are closely related scaffolding proteins that link tight junction (TJ) transmembrane proteins such as claudins, junctional adhesion molecules, and occludin to the actin cytoskeleton. Forms a multistranded TJP1/ZO1 condensate which elongates to form a tight junction belt, the belt is anchored at the apical cell membrane via interaction with PATJ. The tight junction acts to limit movement of substances through the paracellular space and as a boundary between the compositionally distinct apical and basolateral plasma membrane domains of epithelial and endothelial cells. Necessary for lumenogenesis, and particularly efficient epithelial polarization and barrier formation. Plays a role in the regulation of cell migration by targeting CDC42BPBb to the leading edge of migrating cells. With TJP2 and TJP3, participates in the junctional retention and stability of the transcription factor DBPA, but is not involved in its shuttling to the nucleus. May play a role in mediating cell morphology changes during ameloblast differentiation via its role in tight junctions. In Canis lupus familiaris (Dog), this protein is Tight junction protein 1.